Here is a 1094-residue protein sequence, read N- to C-terminus: Potassium-transporting ATPase alpha chain 2 (1094 aa).

Basic and acidic residues predominate over residues 1–21 (MAGGAHRADRATGEERKEGGG). The tract at residues 1-37 (MAGGAHRADRATGEERKEGGGRWRAPHSPSPPGPRGC) is disordered. A compositionally biased stretch (pro residues) spans 28-37 (SPSPPGPRGC). Topologically, residues 56-157 (RYCTLLLFQR…NALTPPKQTP (102 aa)) are cytoplasmic. A helical transmembrane segment spans residues 158–178 (EIIKFLKQMVGGFSILLWVGA). Residues 179–201 (VLCWIAFGIQYVSNPSASLDRVY) lie on the Lumenal side of the membrane. The helical transmembrane segment at 202 to 222 (LGTVLAVVVILTGIFAYYQEA) threads the bilayer. The Cytoplasmic portion of the chain corresponds to 223 to 358 (KSTNIMASFC…NEKTPIAIEI (136 aa)). The interval 286–305 (SSLTGESEPQSRSSGFTHEN) is disordered. Residues 359 to 378 (EHFVHIVAGVAVSVGILFFI) traverse the membrane as a helical segment. Residues 379-390 (IAVCMKYHVLDA) lie on the Lumenal side of the membrane. A helical membrane pass occupies residues 391-408 (IIFLIAIIVANVPEGLLA). Topologically, residues 409 to 842 (TVTVALSLTA…EEGRLIFDNL (434 aa)) are cytoplasmic. Asp-446 serves as the catalytic 4-aspartylphosphate intermediate. Mg(2+) is bound by residues Asp-787 and Asp-791. The chain crosses the membrane as a helical span at residues 843–862 (KKTIAYTLTKNIAELCPFLI). Topologically, residues 863-872 (YIILGLPLPI) are lumenal. Residues 873 to 893 (GTITLLFIDLGTDIIPSIALA) traverse the membrane as a helical segment. Residues 894-913 (YEKAESDIMNRKPRHKKKDR) are Cytoplasmic-facing. The chain crosses the membrane as a helical span at residues 914 to 936 (LVNQQLAVYSYLHIGLMQALGAF). Residues 937-988 (LVYFTVYAQQGFRPTSLFHLRIAWDSDHLNDLEDNYGQEWTSYQRQYLEWTG) lie on the Lumenal side of the membrane. The helical transmembrane segment at 989 to 1008 (YTAFFVGIMVQQIADLIIRK) threads the bilayer. Residues 1009-1022 (TRKNSIFKQGLFRN) lie on the Cytoplasmic side of the membrane. Ser-1013 is subject to Phosphoserine; by PKA. The chain crosses the membrane as a helical span at residues 1023–1041 (KVIWVGIASQIIVALLLSY). Residues 1042–1056 (GLGSITALNFTMLKA) are Lumenal-facing. The helical transmembrane segment at 1057-1077 (QYWFVAVPHAILIWVYDEMRK) threads the bilayer. Residues 1078 to 1094 (LFIRLYPGSWWDKNMYY) lie on the Cytoplasmic side of the membrane.

It belongs to the cation transport ATPase (P-type) (TC 3.A.3) family. Type IIC subfamily. In terms of assembly, the X(+)/K(+) ATPase pump is composed of a catalytic alpha subunit and an auxiliary non-catalytic beta subunit. The alpha subunit pairs with the beta subunit of gastric H(+)/K(+) ATPase ATP4B or the beta subunit of Na(+)/K(+) ATPases ATP1B1 and ATP1B3; this interaction is required for the formation of a functionally active pump and its targeting at the plasma membrane. In terms of tissue distribution, found in the skin, kidney, distal colon and brain. In the kidney it is found in the connecting tubule, cortical collecting duct and outer medullary collecting duct while in the brain it is specific to choroid plexus and cortex.

Its subcellular location is the apical cell membrane. The catalysed reaction is K(+)(out) + ATP + H2O + H(+)(in) = K(+)(in) + ADP + phosphate + 2 H(+)(out). It carries out the reaction K(+)(out) + Na(+)(in) + ATP + H2O = K(+)(in) + Na(+)(out) + ADP + phosphate + H(+). The catalytic subunit of a H(+)/K(+) ATPase and/or Na(+)/K(+) ATPase pump which transports K(+) ions in exchange for Na(+) and/or H(+) ions across the apical membrane of epithelial cells. Uses ATP as an energy source to pump K(+) ions into the cell while transporting Na(+) and/or H(+) ions to the extracellular compartment. Involved in the maintenance of electrolyte homeostasis through K(+) ion absorption in kidney and colon. In the airway epithelium, may play a primary role in mucus acidification regulating its viscosity and clearance. The chain is Potassium-transporting ATPase alpha chain 2 (ATP12A) from Oryctolagus cuniculus (Rabbit).